The sequence spans 126 residues: Large ribosomal subunit protein bL12 (126 aa).

Belongs to the bacterial ribosomal protein bL12 family. In terms of assembly, homodimer. Part of the ribosomal stalk of the 50S ribosomal subunit. Forms a multimeric L10(L12)X complex, where L10 forms an elongated spine to which 2 to 4 L12 dimers bind in a sequential fashion. Binds GTP-bound translation factors.

Its function is as follows. Forms part of the ribosomal stalk which helps the ribosome interact with GTP-bound translation factors. Is thus essential for accurate translation. In Rhizobium meliloti (strain 1021) (Ensifer meliloti), this protein is Large ribosomal subunit protein bL12.